The chain runs to 89 residues: uncharacterized protein (89 aa).

The next 3 membrane-spanning stretches (helical) occupy residues 5 to 25 (AYLV…KRKA), 36 to 56 (RLWL…MQTF), and 67 to 87 (YGVP…YSPF).

Its subcellular location is the cell membrane. This is an uncharacterized protein from Bacillus subtilis (strain 168).